A 117-amino-acid polypeptide reads, in one-letter code: Putative phosphotransferase enzyme IIB component MPN_268 (117 aa).

The chain crosses the membrane as a helical span at residues Met1–Val21. Positions Pro42 to Arg117 constitute a PTS EIIB type-1 domain.

It localises to the membrane. Functionally, the phosphoenolpyruvate-dependent sugar phosphotransferase system (PTS), a major carbohydrate active -transport system, catalyzes the phosphorylation of incoming sugar substrates concomitant with their translocation across the cell membrane. The polypeptide is Putative phosphotransferase enzyme IIB component MPN_268 (Mycoplasma pneumoniae (strain ATCC 29342 / M129 / Subtype 1) (Mycoplasmoides pneumoniae)).